The sequence spans 758 residues: Catalase-peroxidase (758 aa).

Positions 1–10 are enriched in polar residues; that stretch reads MSDTQDNAPA. Residues 1–59 form a disordered region; sequence MSDTQDNAPASAQGVDQKAAAGCPVAHDSVTAHGSESESPAIDSPTPHSGGRPRTNRDW. Residues 128-250 constitute a cross-link (tryptophyl-tyrosyl-methioninium (Trp-Tyr) (with M-276)); it reads WHAAGTYRID…VGATEMGLIY (123 aa). H129 acts as the Proton acceptor in catalysis. Positions 250–276 form a cross-link, tryptophyl-tyrosyl-methioninium (Tyr-Met) (with W-128); sequence YVNPEGPRGNADPAAAAHFIRETFRRM. Position 291 (H291) interacts with heme b.

This sequence belongs to the peroxidase family. Peroxidase/catalase subfamily. As to quaternary structure, homodimer or homotetramer. Requires heme b as cofactor. Post-translationally, formation of the three residue Trp-Tyr-Met cross-link is important for the catalase, but not the peroxidase activity of the enzyme.

The enzyme catalyses H2O2 + AH2 = A + 2 H2O. It catalyses the reaction 2 H2O2 = O2 + 2 H2O. Functionally, bifunctional enzyme with both catalase and broad-spectrum peroxidase activity. The protein is Catalase-peroxidase of Salinispora arenicola (strain CNS-205).